The chain runs to 374 residues: Protein-glutamate methylesterase/protein-glutamine glutaminase 1 (374 aa).

The Response regulatory domain occupies 4–121 (KVLVVDDSSF…ATNKDEAILL (118 aa)). Asp-55 is subject to 4-aspartylphosphate. The disordered stretch occupies residues 141–170 (PSVAPVTPRPTTGSAVGNATTPVQSASAPV). Positions 149–167 (RPTTGSAVGNATTPVQSAS) are enriched in polar residues. Residues 174–374 (PLSSIRASGK…ESILKESARG (201 aa)) enclose the CheB-type methylesterase domain. Active-site residues include Ser-193, His-220, and Asp-316.

Belongs to the CheB family. Post-translationally, phosphorylated by CheA. Phosphorylation of the N-terminal regulatory domain activates the methylesterase activity.

The protein localises to the cytoplasm. The catalysed reaction is [protein]-L-glutamate 5-O-methyl ester + H2O = L-glutamyl-[protein] + methanol + H(+). It catalyses the reaction L-glutaminyl-[protein] + H2O = L-glutamyl-[protein] + NH4(+). In terms of biological role, involved in chemotaxis. Part of a chemotaxis signal transduction system that modulates chemotaxis in response to various stimuli. Catalyzes the demethylation of specific methylglutamate residues introduced into the chemoreceptors (methyl-accepting chemotaxis proteins or MCP) by CheR. Also mediates the irreversible deamidation of specific glutamine residues to glutamic acid. This Shewanella oneidensis (strain ATCC 700550 / JCM 31522 / CIP 106686 / LMG 19005 / NCIMB 14063 / MR-1) protein is Protein-glutamate methylesterase/protein-glutamine glutaminase 1.